The sequence spans 290 residues: Bifunctional protein FolD (290 aa).

NADP(+) contacts are provided by residues G165–S167, S190, and I231.

It belongs to the tetrahydrofolate dehydrogenase/cyclohydrolase family. In terms of assembly, homodimer.

It carries out the reaction (6R)-5,10-methylene-5,6,7,8-tetrahydrofolate + NADP(+) = (6R)-5,10-methenyltetrahydrofolate + NADPH. The enzyme catalyses (6R)-5,10-methenyltetrahydrofolate + H2O = (6R)-10-formyltetrahydrofolate + H(+). The protein operates within one-carbon metabolism; tetrahydrofolate interconversion. In terms of biological role, catalyzes the oxidation of 5,10-methylenetetrahydrofolate to 5,10-methenyltetrahydrofolate and then the hydrolysis of 5,10-methenyltetrahydrofolate to 10-formyltetrahydrofolate. This Aromatoleum aromaticum (strain DSM 19018 / LMG 30748 / EbN1) (Azoarcus sp. (strain EbN1)) protein is Bifunctional protein FolD.